Here is a 425-residue protein sequence, read N- to C-terminus: Cytokine receptor-like factor 1 (425 aa).

The N-terminal stretch at 1 to 33 (MPAGRPGPVAQSARRPPRPLSSLWSPLLLCVLG) is a signal peptide. The 100-residue stretch at 35–134 (PRGGSGAHTA…SILAGSCLYV (100 aa)) folds into the Ig-like C2-type domain. N95, N107, and N143 each carry an N-linked (GlcNAc...) asparagine glycan. 2 consecutive Fibronectin type-III domains span residues 140-235 (KPFN…VLDV) and 240-344 (PPPD…TPRS). C146 and C156 form a disulfide bridge. N171 carries an N-linked (GlcNAc...) asparagine glycan. The cysteines at positions 187 and 198 are disulfide-linked. Phosphoserine is present on S222. A glycan (N-linked (GlcNAc...) asparagine) is linked at N295. The short motif at 330-334 (WSEWS) is the WSXWS motif element. Residues 335 to 366 (HPTAASTPRSERPGPGGGVCEPRGGEPSSGPV) form a disordered region. N385 carries N-linked (GlcNAc...) asparagine glycosylation. The disordered stretch occupies residues 402 to 425 (HKTRNQDEGILPSGRRGAARGPAG). The segment covering 415–425 (GRRGAARGPAG) has biased composition (low complexity).

This sequence belongs to the type I cytokine receptor family. Type 3 subfamily. As to quaternary structure, forms covalent di- and tetramers. Forms a heteromeric complex with cardiotrophin-like cytokine CLCF1/CLC; the CRLF1-CLCF1 complex is a ligand for the ciliary neurotrophic factor receptor/CNTFR. The CRLF1-CLCF1 heterodimer, as well as tripartite signaling complex formed by CRLF1, CLCF1 and CNTFR bind SORL1 (via N-terminal ectodomain); within this complex, the interaction is mediated predominantly by the CRLF1 moiety. Widely expressed in the embryo. Not detected in the brain of adult mice.

Its subcellular location is the secreted. Functionally, in complex with CLCF1, forms a heterodimeric neurotropic cytokine that plays a crucial role during neuronal development. Plays a role in the initiation and/or maintenance of suckling in neonatal mice. May also play a regulatory role in the immune system. The sequence is that of Cytokine receptor-like factor 1 (Crlf1) from Mus musculus (Mouse).